Reading from the N-terminus, the 643-residue chain is DNA polymerase III subunit tau (643 aa).

45–52 (GTRGVGKT) contributes to the ATP binding site. 4 residues coordinate Zn(2+): Cys-64, Cys-73, Cys-76, and Cys-79. The interval 385–404 (TPTQVPPQPQSAPQQAPTVP) is disordered.

Belongs to the DnaX/STICHEL family. In terms of assembly, the DNA polymerase III holoenzyme complex contains at least 10 different subunits organized into 3 functionally essential subassemblies: the Pol III core, the beta sliding clamp processivity factor and the clamp-loading complex. The Pol III core (subunits alpha, epsilon and theta) contains the polymerase and the 3'-5' exonuclease proofreading activities. The polymerase is tethered to the template via the dimeric beta sliding clamp processivity factor. The clamp-loading complex (also called gamma complex) assembles the beta sliding clamp onto the primed template and plays a central role in the organization and communication at the replication fork. The clamp-loading complex contains delta, delta', psi and chi, and 3 copies of either or both of two different DnaX proteins, gamma and tau. The DNA replisome complex has a single clamp loader (3 tau and 1 each of delta, delta', psi and chi subunits) which binds 3 Pol III cores (1 core on the leading strand and 2 on the lagging strand) each with a beta sliding clamp dimer. Additional proteins in the replisome are other copies of gamma, psi and chi, Ssb, DNA helicase and RNA primase. The clamp loader hydrolyzes ATP to assemble the beta processivity factor onto the primed template and plays a central role in the organization and communication at the replication fork; the minimal complex to load the beta sliding clamp on DNA is delta, delta', gamma.

It catalyses the reaction DNA(n) + a 2'-deoxyribonucleoside 5'-triphosphate = DNA(n+1) + diphosphate. In terms of biological role, part of the beta sliding clamp loading complex, which hydrolyzes ATP to load the beta clamp onto primed DNA to form the DNA replication pre-initiation complex. DNA polymerase III is a complex, multichain enzyme responsible for most of the replicative synthesis in bacteria. This DNA polymerase also exhibits 3'-5' exonuclease activity. The gamma complex (gamma(3),delta,delta') is thought to load beta dimers onto DNA by binding ATP which alters the complex's conformation so it can bind beta sliding clamp dimers and open them at one interface. Primed DNA is recognized, ATP is hydrolyzed releasing the gamma complex and closing the beta sliding clamp ring around the primed DNA. Serves as a scaffold to trimerize the core complex. Its function is as follows. Interacts with the delta and delta' subunits to transfer the beta subunit on the DNA. Interacts with ATP, drives ATP-induced conformational changes in the gamma complex that opens the beta sliding clamp ring. After loading of primed DNA ATP is hydrolyzed and the beta sliding clamp ring closes. This is DNA polymerase III subunit tau (dnaX) from Escherichia coli (strain K12).